The sequence spans 144 residues: 3-hydroxyacyl-[acyl-carrier-protein] dehydratase FabZ (144 aa).

The active site involves H47.

It belongs to the thioester dehydratase family. FabZ subfamily.

The protein resides in the cytoplasm. The catalysed reaction is a (3R)-hydroxyacyl-[ACP] = a (2E)-enoyl-[ACP] + H2O. Involved in unsaturated fatty acids biosynthesis. Catalyzes the dehydration of short chain beta-hydroxyacyl-ACPs and long chain saturated and unsaturated beta-hydroxyacyl-ACPs. The polypeptide is 3-hydroxyacyl-[acyl-carrier-protein] dehydratase FabZ (Dechloromonas aromatica (strain RCB)).